Here is a 921-residue protein sequence, read N- to C-terminus: DNA ligase (921 aa).

NAD(+)-binding positions include 90–94, 139–140, and Glu173; these read DAAYD and SL. Catalysis depends on Lys175, which acts as the N6-AMP-lysine intermediate. NAD(+)-binding residues include Arg196, Glu235, Lys360, and Lys384. 4 residues coordinate Zn(2+): Cys481, Cys484, Cys500, and Cys506. Positions 663 to 688 are disordered; it reads EAAIESAETQGGAASETTGAPTGAEA. The BRCT domain maps to 839-921; that stretch reads SLPQTLAGKT…AQLLETGSID (83 aa).

The protein belongs to the NAD-dependent DNA ligase family. LigA subfamily. It depends on Mg(2+) as a cofactor. Requires Mn(2+) as cofactor.

It catalyses the reaction NAD(+) + (deoxyribonucleotide)n-3'-hydroxyl + 5'-phospho-(deoxyribonucleotide)m = (deoxyribonucleotide)n+m + AMP + beta-nicotinamide D-nucleotide.. In terms of biological role, DNA ligase that catalyzes the formation of phosphodiester linkages between 5'-phosphoryl and 3'-hydroxyl groups in double-stranded DNA using NAD as a coenzyme and as the energy source for the reaction. It is essential for DNA replication and repair of damaged DNA. The protein is DNA ligase of Bifidobacterium longum subsp. infantis (strain ATCC 15697 / DSM 20088 / JCM 1222 / NCTC 11817 / S12).